An 802-amino-acid polypeptide reads, in one-letter code: Copper-exporting P-type ATPase (802 aa).

HMA domains lie at 5-70 (KKTT…YGVA) and 72-138 (ETVE…YDAS). Positions 16, 19, 83, and 86 each coordinate Cu(+). A run of 6 helical transmembrane segments spans residues 161–181 (LIISAVLSLPLLMLMFVHLFN), 192–212 (WFQFILATPVQFIIGWQFYVG), 224–244 (MDVLVAVGTSAAYFYSIYEMV), 256–276 (LYFETSAVLITLILFGKYLEA), 411–431 (YFVPIVVGIALLTFIVWITLV), and 438–458 (PALVASISVLVIACPCALGLA). Residue Asp-495 is the 4-aspartylphosphate intermediate of the active site. Residues Asp-690 and Asp-694 each contribute to the Mg(2+) site. The next 2 membrane-spanning stretches (helical) occupy residues 748–767 (LFWAFGYNIAGIPIAALGLL) and 771–790 (VAGAAMALSSVSVVTNALRL).

Belongs to the cation transport ATPase (P-type) (TC 3.A.3) family. Type IB subfamily.

It is found in the cell membrane. It carries out the reaction Cu(+)(in) + ATP + H2O = Cu(+)(out) + ADP + phosphate + H(+). Its function is as follows. Involved in copper export. The chain is Copper-exporting P-type ATPase (copA) from Staphylococcus aureus (strain MRSA252).